The chain runs to 86 residues: Cell division topological specificity factor (86 aa).

The protein belongs to the MinE family.

Its function is as follows. Prevents the cell division inhibition by proteins MinC and MinD at internal division sites while permitting inhibition at polar sites. This ensures cell division at the proper site by restricting the formation of a division septum at the midpoint of the long axis of the cell. The chain is Cell division topological specificity factor from Shewanella loihica (strain ATCC BAA-1088 / PV-4).